Consider the following 371-residue polypeptide: Glycosyltransferase 8 domain-containing protein 1 (371 aa).

Topologically, residues 1–7 are cytoplasmic; the sequence is MSFRKVN. The chain crosses the membrane as a helical; Signal-anchor for type II membrane protein span at residues 8-28; it reads IIIWVLAVVLFLLVLHHNFLS. Residues 29 to 371 are Lumenal-facing; that stretch reads LSSLLKNDIS…RRHMDTSNIK (343 aa). Asn-257 carries N-linked (GlcNAc...) asparagine glycosylation.

Belongs to the glycosyltransferase 8 family.

The protein localises to the membrane. The polypeptide is Glycosyltransferase 8 domain-containing protein 1 (Glt8d1) (Mus musculus (Mouse)).